The primary structure comprises 166 residues: NAD(P)H-quinone oxidoreductase subunit I, chloroplastic (166 aa).

4Fe-4S ferredoxin-type domains lie at 55 to 84 and 95 to 124; these read GRIH…VDWK and LNYS…MTEE. Residues C64, C67, C70, C74, C104, C107, C110, and C114 each coordinate [4Fe-4S] cluster.

Belongs to the complex I 23 kDa subunit family. As to quaternary structure, NDH is composed of at least 16 different subunits, 5 of which are encoded in the nucleus. [4Fe-4S] cluster serves as cofactor.

The protein localises to the plastid. The protein resides in the chloroplast thylakoid membrane. It carries out the reaction a plastoquinone + NADH + (n+1) H(+)(in) = a plastoquinol + NAD(+) + n H(+)(out). It catalyses the reaction a plastoquinone + NADPH + (n+1) H(+)(in) = a plastoquinol + NADP(+) + n H(+)(out). Its function is as follows. NDH shuttles electrons from NAD(P)H:plastoquinone, via FMN and iron-sulfur (Fe-S) centers, to quinones in the photosynthetic chain and possibly in a chloroplast respiratory chain. The immediate electron acceptor for the enzyme in this species is believed to be plastoquinone. Couples the redox reaction to proton translocation, and thus conserves the redox energy in a proton gradient. This is NAD(P)H-quinone oxidoreductase subunit I, chloroplastic from Ambrosia trifida (Giant ragweed).